We begin with the raw amino-acid sequence, 334 residues long: Photosystem II assembly protein Ycf48 (334 aa).

Residues 1 to 22 (MAKMLKLWRLVLLAAFSLLLMA) form the signal peptide.

This sequence belongs to the Ycf48 family. Part of early PSII assembly complexes which includes D1 (psbA) and PsbI; not found in mature PSII. Binds to the lumenal side of PSII complexes. Interacts with YidC.

It localises to the cellular thylakoid lumen. In terms of biological role, a factor required for optimal assembly of photosystem II (PSII), acting in the early stages of PSII assembly. Also plays a role in replacement of photodamaged D1 (psbA). Assists YidC in synthesis of chlorophyll-binding proteins. The polypeptide is Photosystem II assembly protein Ycf48 (Synechococcus sp. (strain JA-3-3Ab) (Cyanobacteria bacterium Yellowstone A-Prime)).